The chain runs to 975 residues: Protein HIRA (975 aa).

WD repeat units follow at residues 10–50 (RHEG…KDND), 64–103 (DHFGTVNCVRWAHHGRYLASGSDDQVIQIHERKAGTGTSE), 123–162 (GHTADVVDLNWSPDDSTLASGSLDNTVHIWSMANGICTAV), 165–204 (GHSSLVKGVTWDPIGSFIASQSDDKTVIIWRTSDWSLAHR), 214–256 (GSTF…ATFD), 259–331 (GHNA…PLFV), and 335–374 (FFTQSVVDLSWSPDGYSLFACSLDGSVATFHFEAKELGYR). The span at 418 to 433 (KKVSSVQQFQSPPKVS) shows a compositional bias: low complexity. Disordered stretches follow at residues 418–510 (KKVS…RSQN) and 948–975 (NVEQMDVTPTPPPPPPAAATEGNNNGAS). Polar residues predominate over residues 435-445 (DAPNPSTSVPN). The segment covering 478 to 492 (KQREYRRPDGRKRII) has biased composition (basic and acidic residues). The span at 499 to 510 (PSNQDMSNRSQN) shows a compositional bias: polar residues. Residues 923-954 (ATNRKVQRLLNEFMDLLSEYEAAETNVEQMDV) adopt a coiled-coil conformation.

The protein belongs to the WD repeat HIR1 family.

The protein resides in the nucleus. Histone chaperone involved in maintining knox genes silencing throughout leaf development. The sequence is that of Protein HIRA from Oryza sativa subsp. japonica (Rice).